The chain runs to 945 residues: Sensor kinase CckA (945 aa).

2 consecutive transmembrane segments (helical) span residues 111-131 and 139-159; these read ALRL…YFLF and FALV…FGAA. PAS domains follow at residues 171–212, 313–341, and 432–505; these read HQDL…TDAD, LDHA…EWLG, and AEVR…FAGQ. Positions 574-797 constitute a Histidine kinase domain; the sequence is GIAHDFNNVL…TFKIFLPRLI (224 aa). H577 is subject to Phosphohistidine; by autocatalysis. One can recognise a Response regulatory domain in the interval 825 to 941; the sequence is TVLLVEDEDA…QLATTVKEML (117 aa). At D876 the chain carries 4-aspartylphosphate.

The protein localises to the cell inner membrane. It carries out the reaction ATP + protein L-histidine = ADP + protein N-phospho-L-histidine.. Its function is as follows. Component of a regulatory phosphorelay system that controls B.abortus cell growth, division, and intracellular survival inside mammalian host cells. This signaling pathway is composed of CckA, ChpT, CtrA and CpdR. CckA autophosphorylates in the presence of ATP on a conserved His residue and transfers a phosphoryl group to a conserved Asp residue on its C-terminal receiver domain. CckA-P transfers phosphoryl groups to the ChpT phosphotransferase. In Brucella abortus (strain 2308), this protein is Sensor kinase CckA.